A 274-amino-acid chain; its full sequence is Large ribosomal subunit protein uL2 (274 aa).

Residues 214-274 form a disordered region; that stretch reads LGRRPRTRPV…NKYIVERRKK (61 aa).

This sequence belongs to the universal ribosomal protein uL2 family. In terms of assembly, part of the 50S ribosomal subunit. Forms a bridge to the 30S subunit in the 70S ribosome.

In terms of biological role, one of the primary rRNA binding proteins. Required for association of the 30S and 50S subunits to form the 70S ribosome, for tRNA binding and peptide bond formation. It has been suggested to have peptidyltransferase activity; this is somewhat controversial. Makes several contacts with the 16S rRNA in the 70S ribosome. In Flavobacterium johnsoniae (strain ATCC 17061 / DSM 2064 / JCM 8514 / BCRC 14874 / CCUG 350202 / NBRC 14942 / NCIMB 11054 / UW101) (Cytophaga johnsonae), this protein is Large ribosomal subunit protein uL2.